A 596-amino-acid polypeptide reads, in one-letter code: Phosphomethylpyrimidine synthase 1 (596 aa).

Substrate-binding positions include N228, M257, Y286, H322, 342 to 344, 383 to 386, and E422; these read SRG and DGLR. H426 contacts Zn(2+). Y449 contacts substrate. H490 is a Zn(2+) binding site. C570, C573, and C578 together coordinate [4Fe-4S] cluster.

This sequence belongs to the ThiC family. In terms of assembly, homodimer. The cofactor is [4Fe-4S] cluster.

It carries out the reaction 5-amino-1-(5-phospho-beta-D-ribosyl)imidazole + S-adenosyl-L-methionine = 4-amino-2-methyl-5-(phosphooxymethyl)pyrimidine + CO + 5'-deoxyadenosine + formate + L-methionine + 3 H(+). It functions in the pathway cofactor biosynthesis; thiamine diphosphate biosynthesis. Functionally, catalyzes the synthesis of the hydroxymethylpyrimidine phosphate (HMP-P) moiety of thiamine from aminoimidazole ribotide (AIR) in a radical S-adenosyl-L-methionine (SAM)-dependent reaction. The protein is Phosphomethylpyrimidine synthase 1 of Syntrophotalea carbinolica (strain DSM 2380 / NBRC 103641 / GraBd1) (Pelobacter carbinolicus).